A 239-amino-acid chain; its full sequence is Exosome complex component Rrp41 (239 aa).

A disordered region spans residues 1-21 (MEERPERLISEDGLRLDGRKP).

Belongs to the RNase PH family. Rrp41 subfamily. In terms of assembly, component of the archaeal exosome complex. Forms a hexameric ring-like arrangement composed of 3 Rrp41-Rrp42 heterodimers. The hexameric ring associates with a trimer of Rrp4 and/or Csl4 subunits.

Its subcellular location is the cytoplasm. Functionally, catalytic component of the exosome, which is a complex involved in RNA degradation. Has 3'-&gt;5' exoribonuclease activity. Can also synthesize heteromeric RNA-tails. In Methanopyrus kandleri (strain AV19 / DSM 6324 / JCM 9639 / NBRC 100938), this protein is Exosome complex component Rrp41.